Reading from the N-terminus, the 99-residue chain is Integration host factor subunit alpha (99 aa).

The tract at residues F49–I73 is disordered.

It belongs to the bacterial histone-like protein family. As to quaternary structure, heterodimer of an alpha and a beta chain.

Functionally, this protein is one of the two subunits of integration host factor, a specific DNA-binding protein that functions in genetic recombination as well as in transcriptional and translational control. The chain is Integration host factor subunit alpha from Shigella boydii serotype 18 (strain CDC 3083-94 / BS512).